Here is a 410-residue protein sequence, read N- to C-terminus: Cathepsin D (410 aa).

An N-terminal signal peptide occupies residues 1–20 (MKTPGVLLLILGLLASSSFA). Positions 21–64 (IIRIPLRKFTSIRRTMTEVGGSVEDLILKGPITKYSMQSSPKTT) are cleaved as a propeptide — activation peptide. The Peptidase A1 domain maps to 79-405 (YYGDIGIGTP…DRDNNRVGFA (327 aa)). 2 disulfides stabilise this stretch: Cys-91–Cys-160 and Cys-110–Cys-117. The active site involves Asp-97. A glycan (N-linked (GlcNAc...) asparagine) is linked at Asn-134. N-linked (GlcNAc...) (high mannose) asparagine glycosylation is present at Asn-261. An intrachain disulfide couples Cys-284 to Cys-288. Asp-293 is an active-site residue. An intrachain disulfide couples Cys-327 to Cys-364.

It belongs to the peptidase A1 family. As to quaternary structure, consists of a light chain and a heavy chain. Interacts with ADAM30; this leads to activation of CTSD. Interacts with GRN; stabilizes CTSD; increases its proteolytic activity. N- and O-glycosylated. Post-translationally, undergoes proteolytic cleavage and activation by ADAM30.

The protein localises to the lysosome. It is found in the melanosome. The protein resides in the secreted. Its subcellular location is the extracellular space. It carries out the reaction Specificity similar to, but narrower than, that of pepsin A. Does not cleave the 4-Gln-|-His-5 bond in B chain of insulin.. Its function is as follows. Acid protease active in intracellular protein breakdown. Plays a role in APP processing following cleavage and activation by ADAM30 which leads to APP degradation. The polypeptide is Cathepsin D (Ctsd) (Mus musculus (Mouse)).